The primary structure comprises 217 residues: Large ribosomal subunit protein uL1 (217 aa).

Belongs to the universal ribosomal protein uL1 family. Part of the 50S ribosomal subunit.

Its function is as follows. Binds directly to 23S rRNA. The L1 stalk is quite mobile in the ribosome, and is involved in E site tRNA release. Functionally, protein L1 is also a translational repressor protein, it controls the translation of the L11 operon by binding to its mRNA. The protein is Large ribosomal subunit protein uL1 of Wolbachia pipientis wMel.